A 197-amino-acid chain; its full sequence is Holliday junction branch migration complex subunit RuvA (197 aa).

Positions 1–64 (MYEYIKGKYI…EDFIGVYGFL (64 aa)) are domain I. The segment at 65-144 (TKDELSMFKL…DILEEDDEQI (80 aa)) is domain II. The tract at residues 145 to 149 (INKVT) is flexible linker. A domain III region spans residues 149–197 (TDDKKVLEAVAALVTLGYSEKEANKVINSCDKNNSLEQIIKEALKYLMK).

This sequence belongs to the RuvA family. In terms of assembly, homotetramer. Forms an RuvA(8)-RuvB(12)-Holliday junction (HJ) complex. HJ DNA is sandwiched between 2 RuvA tetramers; dsDNA enters through RuvA and exits via RuvB. An RuvB hexamer assembles on each DNA strand where it exits the tetramer. Each RuvB hexamer is contacted by two RuvA subunits (via domain III) on 2 adjacent RuvB subunits; this complex drives branch migration. In the full resolvosome a probable DNA-RuvA(4)-RuvB(12)-RuvC(2) complex forms which resolves the HJ.

The protein resides in the cytoplasm. In terms of biological role, the RuvA-RuvB-RuvC complex processes Holliday junction (HJ) DNA during genetic recombination and DNA repair, while the RuvA-RuvB complex plays an important role in the rescue of blocked DNA replication forks via replication fork reversal (RFR). RuvA specifically binds to HJ cruciform DNA, conferring on it an open structure. The RuvB hexamer acts as an ATP-dependent pump, pulling dsDNA into and through the RuvAB complex. HJ branch migration allows RuvC to scan DNA until it finds its consensus sequence, where it cleaves and resolves the cruciform DNA. The polypeptide is Holliday junction branch migration complex subunit RuvA (Clostridium botulinum (strain Kyoto / Type A2)).